The chain runs to 493 residues: Cell division protein FtsA (493 aa).

Residues 434 to 468 (AHQSNPTPHIHSSPTERNLSDLKTPSAPLNTAKND) are disordered. The span at 436–465 (QSNPTPHIHSSPTERNLSDLKTPSAPLNTA) shows a compositional bias: polar residues.

It belongs to the FtsA/MreB family. Self-interacts. Interacts with FtsZ.

The protein localises to the cell inner membrane. Cell division protein that is involved in the assembly of the Z ring. May serve as a membrane anchor for the Z ring. This Helicobacter pylori (strain J99 / ATCC 700824) (Campylobacter pylori J99) protein is Cell division protein FtsA.